A 209-amino-acid chain; its full sequence is Large ribosomal subunit protein bL25 (209 aa).

This sequence belongs to the bacterial ribosomal protein bL25 family. CTC subfamily. In terms of assembly, part of the 50S ribosomal subunit; part of the 5S rRNA/L5/L18/L25 subcomplex. Contacts the 5S rRNA. Binds to the 5S rRNA independently of L5 and L18.

In terms of biological role, this is one of the proteins that binds to the 5S RNA in the ribosome where it forms part of the central protuberance. This chain is Large ribosomal subunit protein bL25, found in Xanthomonas campestris pv. campestris (strain B100).